The following is a 531-amino-acid chain: Probable peptide ABC transporter periplasmic-binding protein y4tO (531 aa).

The tat-type signal signal peptide spans methionine 1 to alanine 32.

Belongs to the bacterial solute-binding protein 5 family. Post-translationally, predicted to be exported by the Tat system. The position of the signal peptide cleavage has not been experimentally proven.

It is found in the periplasm. Its function is as follows. Probably part of the binding-protein-dependent transport system y4tOPQRS for a peptide. The protein is Probable peptide ABC transporter periplasmic-binding protein y4tO of Sinorhizobium fredii (strain NBRC 101917 / NGR234).